The chain runs to 352 residues: Rhodopsin, deep-sea form (352 aa).

Topologically, residues 1–36 (MNGTEGPNFYIPMSNITGVVRSPFEYPQYYLAEPWA) are extracellular. 2 N-linked (GlcNAc...) asparagine glycosylation sites follow: Asn2 and Asn15. The chain crosses the membrane as a helical span at residues 37–61 (YTILAAYMFTLILLGFPVNFLTLYV). Residues 62–73 (TIEHKKLRTPLN) are Cytoplasmic-facing. The chain crosses the membrane as a helical span at residues 74–98 (YILLNLAVANLFMVFGGFTTTVYTS). Residues 99-113 (MHGYFVFGETGCNLE) are Extracellular-facing. The cysteines at positions 110 and 187 are disulfide-linked. The helical transmembrane segment at 114–133 (GYFATLGGEISLWSLVVLAI) threads the bilayer. Residues 134–152 (ERWVVVCKPMSNFRFGENH) are Cytoplasmic-facing. Residues 153–176 (AIMGLAFTWIMANSCAMPPLFGWS) form a helical membrane-spanning segment. At 177–202 (RYIPEGMQCSCGVDYYTLKPEVNNES) the chain is on the extracellular side. Residue Asn200 is glycosylated (N-linked (GlcNAc...) asparagine). Residues 203–230 (FVIYMFIVHFSVPLTIISFCYGRLVCTV) form a helical membrane-spanning segment. The Cytoplasmic segment spans residues 231 to 252 (KEAAAQQQESETTQRAEREVTR). A helical transmembrane segment spans residues 253–276 (MVVIMVIAFLVCWVPYASVAWYIF). At 277 to 284 (THQGSTFG) the chain is on the extracellular side. The chain crosses the membrane as a helical span at residues 285–309 (PVFMTVPSFFAKSSAIYNPLIYICL). Lys296 carries the N6-(retinylidene)lysine modification. Over 310 to 352 (NSQFRNCMITTLFCGKNPFQEEEGASTTASKTEASSVSSVSPA) the chain is Cytoplasmic. The S-palmitoyl cysteine moiety is linked to residue Cys323. Positions 333-352 (GASTTASKTEASSVSSVSPA) are disordered. Positions 334–352 (ASTTASKTEASSVSSVSPA) are enriched in low complexity.

It belongs to the G-protein coupled receptor 1 family. Opsin subfamily. Post-translationally, phosphorylated on some or all of the serine and threonine residues present in the C-terminal region. Rod shaped photoreceptor cells which mediates vision in dim light.

It is found in the membrane. Functionally, visual pigments such as rhodopsin and porphyropsin are light-absorbing molecules that mediate vision. Rhodopsin consists of an apoprotein, opsin, covalently linked to 11-cis-retinal. This receptor is coupled to the activation of phospholipase C. Porphyropsin consists of opsin covalently linked to 11-cis 3,4-didehydroretinal. This Anguilla anguilla (European freshwater eel) protein is Rhodopsin, deep-sea form.